Here is a 1340-residue protein sequence, read N- to C-terminus: Iron-sulfur cluster assembly protein SufD (1340 aa).

The span at 477–487 (NSLKHNNNNTK) shows a compositional bias: low complexity. Disordered stretches follow at residues 477–498 (NSLKHNNNNTKPSSQKYEERSS), 723–743 (HGKDNTQHDDKNNPNFRNYLN), 765–794 (NVSTDEKRETQYDVKGNNPDTETNNEQSTV), 835–865 (EKNESNEGKGNDLDATEQRENEQVGPNGEKK), and 992–1055 (NIPT…NNIQ). The span at 723–734 (HGKDNTQHDDKN) shows a compositional bias: basic and acidic residues. Over residues 782–794 (NPDTETNNEQSTV) the composition is skewed to polar residues. Residues 1022–1037 (DNLLQNDQATNSNVEI) show a composition bias toward polar residues.

It belongs to the iron-sulfur cluster assembly SufBD family. In terms of assembly, component of a complex composed of SufB, SufC and SufD in a stoichiometric ratio of 1:2:1. Interacts with SufB. Interacts with SufC; the interaction enhances the ATPase activity of SufC.

The protein resides in the plastid. It is found in the apicoplast. Its pathway is cofactor biosynthesis; iron-sulfur cluster biosynthesis. Participates in the sulfur mobilization (SUF) pathway for iron-sulfur (Fe-S) cluster biogenesis. As part of a complex consisting of SufB-SufC(2)-SufD, involved in assembly of [4Fe-4S] clusters. Enhances the ATPase activity of SufC. The polypeptide is Iron-sulfur cluster assembly protein SufD (Plasmodium berghei (strain Anka)).